Here is a 175-residue protein sequence, read N- to C-terminus: MFQTFISRHNSNFFSDKLVLTSVTPASSAPVLQTPKATSSTLYFDSLTVNAGNGGFLHCIQMDTSVNAANQVVSVGADIAFDADPKFFACLVRFESSSVPTTLPTAYDVYPLNGRHDGGYYTVKDCVTIDVLPRTPGNNVYVGFMVWSNFTATKCRGLVSLNQVIKEIICLQPLK.

It belongs to the microvirus G protein family. As to quaternary structure, pentamerizes and interacts with H protein, F and B pentamers to form 12S pre-assembly complex. Joining of twelve 12S complex form the procapsid.

The protein localises to the virion. The protein resides in the host cytoplasm. In terms of biological role, attaches the circulating virion to the bacterial lipopolysaccharides which serve as receptor for the virus. Determines the phage host-range. Probably triggers with protein H the injection of the phage DNA into the host cytoplasm upon conformational changes induced by the interaction with host lipopolysaccharides. In Escherichia coli C (Isolate Sanger), this protein is Major spike protein G (G).